Consider the following 169-residue polypeptide: uncharacterized protein (169 aa).

This is an uncharacterized protein from Mycoplasma pneumoniae (strain ATCC 29342 / M129 / Subtype 1) (Mycoplasmoides pneumoniae).